A 447-amino-acid polypeptide reads, in one-letter code: Rab GDP dissociation inhibitor alpha (447 aa).

This sequence belongs to the Rab GDI family. As to quaternary structure, interacts with RHOH. Interacts with the non-phosphorylated forms of RAB1A, RAB3A, RAB5A, RAB5B, RAB5C, RAB8A, RAB8B, RAB10, RAB12, RAB35, and RAB43. Brain; predominant in neural and sensory tissues.

It localises to the cytoplasm. It is found in the golgi apparatus. Its subcellular location is the trans-Golgi network. Its function is as follows. Regulates the GDP/GTP exchange reaction of most Rab proteins by inhibiting the dissociation of GDP from them, and the subsequent binding of GTP to them. Promotes the dissociation of GDP-bound Rab proteins from the membrane and inhibits their activation. Promotes the dissociation of RAB1A, RAB3A, RAB5A and RAB10 from membranes. The polypeptide is Rab GDP dissociation inhibitor alpha (GDI1) (Homo sapiens (Human)).